A 607-amino-acid chain; its full sequence is Guanine nucleotide-binding protein-like 1 (607 aa).

Over residues 1 to 14 (MPRKKPFSVKQKKK) the composition is skewed to basic residues. The segment at 1–81 (MPRKKPFSVK…GPRGYDPNRY (81 aa)) is disordered. Positions 15 to 26 (QLQDKRERKRGL) are enriched in basic and acidic residues. Phosphoserine occurs at positions 32, 33, and 34. A phosphothreonine mark is found at threonine 48 and threonine 50. Phosphoserine occurs at positions 51 and 68. The CP-type G domain occupies 178 to 418 (WRQLWRVLEM…LCDCPGLIFP (241 aa)). 225-228 (NKVD) lines the GTP pocket. Serine 324 is subject to Phosphoserine. GTP contacts are provided by residues 367–374 (GFPNVGKS) and 411–415 (DCPGL). Residues 547-607 (GPAGDEEEEE…PYALLGEDEC (61 aa)) are disordered. Over residues 550–584 (GDEEEEEEEELSSSCEEEGEEDRDADEEGEGDEDT) the composition is skewed to acidic residues. 3 positions are modified to phosphoserine: serine 561, serine 562, and serine 563.

Belongs to the TRAFAC class YlqF/YawG GTPase family.

In terms of biological role, possible regulatory or functional link with the histocompatibility cluster. The protein is Guanine nucleotide-binding protein-like 1 (GNL1) of Macaca fascicularis (Crab-eating macaque).